The chain runs to 177 residues: Large ribosomal subunit protein bL9 (177 aa).

This sequence belongs to the bacterial ribosomal protein bL9 family.

Binds to the 23S rRNA. The sequence is that of Large ribosomal subunit protein bL9 from Rhodopirellula baltica (strain DSM 10527 / NCIMB 13988 / SH1).